Reading from the N-terminus, the 450-residue chain is Sulfite exporter TauE/SafE family protein 1 (450 aa).

The next 12 membrane-spanning stretches (helical) occupy residues 5-25 (LVPLLLSLITIFTIFNPSALA), 48-68 (TIEVSIPTIIAAVLSFFAASI), 70-90 (SAGGIGGGGLFLSIMTIIAGL), 97-117 (SFSAFMVTGVSFANVGCNLFL), 130-150 (FDLALTIQPCLLLGVSIGVIC), 153-173 (MFPNWLVLFLFAVFLAWSTMK), 223-243 (FPWMKLGVLVIIWLLFFSINL), 261-281 (ALYWFLSSLQIPLTIFFTLCI), 316-336 (VMALLAGVLGGLFGIGGGMLI), 340-360 (LLQIGIAPEVTAATCSFMVLF), 378-398 (GTAAIFALVCFVASLVGLMVV), and 408-428 (ASIIVFAVGIVMALSTVLMTT).

This sequence belongs to the 4-toluene sulfonate uptake permease (TSUP) (TC 2.A.102) family.

It localises to the membrane. The polypeptide is Sulfite exporter TauE/SafE family protein 1 (Arabidopsis thaliana (Mouse-ear cress)).